Here is a 224-residue protein sequence, read N- to C-terminus: Ras-related protein RABA4b (224 aa).

The residue at position 2 (Ala-2) is an N-acetylalanine. A GTP-binding site is contributed by 24–31; that stretch reads GDSAVGKS. The Effector region signature appears at 46-54; sequence SKATIGVEF. Residues 72–76, 130–133, and 160–161 each bind GTP; these read DTAGQ, NKSD, and SA. 2 S-geranylgeranyl cysteine lipidation sites follow: Cys-220 and Cys-221.

It belongs to the small GTPase superfamily. Rab family. As to quaternary structure, interacts with TCTP1. In terms of tissue distribution, expressed in roots, stems, leaves and flowers. Expressed in tips of growing root hair cells.

The protein resides in the early endosome membrane. The protein localises to the golgi apparatus. It is found in the trans-Golgi network membrane. Functionally, regulator of membrane trafficking. May be required for secretion of cell wall components in cells. In Arabidopsis thaliana (Mouse-ear cress), this protein is Ras-related protein RABA4b.